Reading from the N-terminus, the 204-residue chain is Glycerol-3-phosphate acyltransferase (204 aa).

The next 4 membrane-spanning stretches (helical) occupy residues 8–28, 76–96, 122–142, and 166–186; these read NAQF…LLLA, GVLV…LWGI, MGVM…VWAL, and FILH…VLLY.

This sequence belongs to the PlsY family. In terms of assembly, probably interacts with PlsX.

The protein resides in the cell inner membrane. The enzyme catalyses an acyl phosphate + sn-glycerol 3-phosphate = a 1-acyl-sn-glycero-3-phosphate + phosphate. Its pathway is lipid metabolism; phospholipid metabolism. Its function is as follows. Catalyzes the transfer of an acyl group from acyl-phosphate (acyl-PO(4)) to glycerol-3-phosphate (G3P) to form lysophosphatidic acid (LPA). This enzyme utilizes acyl-phosphate as fatty acyl donor, but not acyl-CoA or acyl-ACP. This Sulfurimonas denitrificans (strain ATCC 33889 / DSM 1251) (Thiomicrospira denitrificans (strain ATCC 33889 / DSM 1251)) protein is Glycerol-3-phosphate acyltransferase.